The following is a 104-amino-acid chain: Co-chaperonin GroES 2 (104 aa).

Belongs to the GroES chaperonin family. Heptamer of 7 subunits arranged in a ring. Interacts with the chaperonin GroEL.

The protein localises to the cytoplasm. Functionally, together with the chaperonin GroEL, plays an essential role in assisting protein folding. The GroEL-GroES system forms a nano-cage that allows encapsulation of the non-native substrate proteins and provides a physical environment optimized to promote and accelerate protein folding. GroES binds to the apical surface of the GroEL ring, thereby capping the opening of the GroEL channel. In Mesorhizobium japonicum (strain LMG 29417 / CECT 9101 / MAFF 303099) (Mesorhizobium loti (strain MAFF 303099)), this protein is Co-chaperonin GroES 2.